Reading from the N-terminus, the 1201-residue chain is uncharacterized protein (1201 aa).

The helical transmembrane segment at 140 to 160 (IIINLIFFFAFIIVGIYLFKP) threads the bilayer. 2 coiled-coil regions span residues 420-459 (QKKQ…AELN) and 536-574 (AIKA…ITKM).

It is found in the cell membrane. This is an uncharacterized protein from Bacillus subtilis (strain 168).